A 48-amino-acid chain; its full sequence is ATP synthase protein 8 (48 aa).

Residues 12–32 traverse the membrane as a helical segment; the sequence is QLTYGLLLITVLLILFSQFFL.

It belongs to the ATPase protein 8 family. F-type ATPases have 2 components, CF(1) - the catalytic core - and CF(0) - the membrane proton channel.

It is found in the mitochondrion membrane. Its function is as follows. Mitochondrial membrane ATP synthase (F(1)F(0) ATP synthase or Complex V) produces ATP from ADP in the presence of a proton gradient across the membrane which is generated by electron transport complexes of the respiratory chain. F-type ATPases consist of two structural domains, F(1) - containing the extramembraneous catalytic core and F(0) - containing the membrane proton channel, linked together by a central stalk and a peripheral stalk. During catalysis, ATP synthesis in the catalytic domain of F(1) is coupled via a rotary mechanism of the central stalk subunits to proton translocation. Part of the complex F(0) domain. Minor subunit located with subunit a in the membrane. In Candida glabrata (strain ATCC 2001 / BCRC 20586 / JCM 3761 / NBRC 0622 / NRRL Y-65 / CBS 138) (Yeast), this protein is ATP synthase protein 8 (ATP8).